Here is a 315-residue protein sequence, read N- to C-terminus: Porphobilinogen deaminase (315 aa).

At Cys-245 the chain carries S-(dipyrrolylmethanemethyl)cysteine.

This sequence belongs to the HMBS family. As to quaternary structure, monomer. Requires dipyrromethane as cofactor.

The enzyme catalyses 4 porphobilinogen + H2O = hydroxymethylbilane + 4 NH4(+). It functions in the pathway porphyrin-containing compound metabolism; protoporphyrin-IX biosynthesis; coproporphyrinogen-III from 5-aminolevulinate: step 2/4. The protein operates within porphyrin-containing compound metabolism; chlorophyll biosynthesis. In terms of biological role, tetrapolymerization of the monopyrrole PBG into the hydroxymethylbilane pre-uroporphyrinogen in several discrete steps. The polypeptide is Porphobilinogen deaminase (Prochlorococcus marinus (strain NATL1A)).